We begin with the raw amino-acid sequence, 260 residues long: MFDIGVNLTSSQFEKDREQVVIRAKLAGVSGILITGTNAQESHQAMLLAQAYPDYCWSTAGVHPHDASQWNDAIAEQLHQMANAACVVSIGECGLDFNRNFSTPEEQEQAFSAQLAIAAELSMPVFLHCRDAHPRFISLLTPWLSQLPAAVVHCFTGNRHELDECLAAGLMIGITGWVCDERRGLELRALLPHIPADRLLVETDAPYLLPRDLRPKPASRRNEPCYLPHIIRQIAEWRGEDATWLGQTTDENARRVFRLA.

3 residues coordinate a divalent metal cation: glutamate 92, histidine 128, and histidine 153.

Belongs to the metallo-dependent hydrolases superfamily. TatD-type hydrolase family. TatD subfamily. In terms of assembly, monomer. Mg(2+) serves as cofactor.

The protein resides in the cytoplasm. Its function is as follows. 3'-5' exonuclease that prefers single-stranded DNA and RNA. May play a role in the H(2)O(2)-induced DNA damage repair. In Pectobacterium atrosepticum (strain SCRI 1043 / ATCC BAA-672) (Erwinia carotovora subsp. atroseptica), this protein is 3'-5' ssDNA/RNA exonuclease TatD.